The following is a 568-amino-acid chain: Protein yellow (568 aa).

The first 28 residues, 1 to 28 (MHAQDKGGILPALSLLLIAVAMVSPSQA), serve as a signal peptide directing secretion. 2 N-linked (GlcNAc...) asparagine glycosylation sites follow: Asn-151 and Asn-222.

Belongs to the major royal jelly protein family.

The protein resides in the secreted. Functionally, controls the pigmentation pattern of the adult cuticle and larval mouth parts. The polypeptide is Protein yellow (y) (Drosophila madeirensis (Fruit fly)).